We begin with the raw amino-acid sequence, 430 residues long: Glucose-1-phosphate adenylyltransferase (430 aa).

Residues glycine 163, 178 to 179, and serine 210 contribute to the alpha-D-glucose 1-phosphate site; that span reads EK.

Belongs to the bacterial/plant glucose-1-phosphate adenylyltransferase family. Homotetramer.

The enzyme catalyses alpha-D-glucose 1-phosphate + ATP + H(+) = ADP-alpha-D-glucose + diphosphate. It participates in glycan biosynthesis; glycogen biosynthesis. Its function is as follows. Involved in the biosynthesis of ADP-glucose, a building block required for the elongation reactions to produce glycogen. Catalyzes the reaction between ATP and alpha-D-glucose 1-phosphate (G1P) to produce pyrophosphate and ADP-Glc. The chain is Glucose-1-phosphate adenylyltransferase from Synechococcus elongatus (strain ATCC 33912 / PCC 7942 / FACHB-805) (Anacystis nidulans R2).